A 172-amino-acid chain; its full sequence is MKNIVLIGFMGTGKTAVGRRLAGRLKREFIDTDAEIEKVTGKTVAQIFARDGQIRFRSEEALLVRKLAGKENLVISTGGGMVLNPENVRLLKENGVLIALTADPEVICRRVKNKKNRPLLMRGDLRENIKALLKEREGVYDVAEHKVDTGSMSLDQAVENIIHFLKEHNYIE.

11 to 16 (GTGKTA) contributes to the ATP binding site. Threonine 15 is a Mg(2+) binding site. Positions 33, 57, and 79 each coordinate substrate. Position 117 (arginine 117) interacts with ATP. Arginine 136 serves as a coordination point for substrate.

This sequence belongs to the shikimate kinase family. In terms of assembly, monomer. Mg(2+) serves as cofactor.

Its subcellular location is the cytoplasm. It carries out the reaction shikimate + ATP = 3-phosphoshikimate + ADP + H(+). It participates in metabolic intermediate biosynthesis; chorismate biosynthesis; chorismate from D-erythrose 4-phosphate and phosphoenolpyruvate: step 5/7. Functionally, catalyzes the specific phosphorylation of the 3-hydroxyl group of shikimic acid using ATP as a cosubstrate. The sequence is that of Shikimate kinase from Pelotomaculum thermopropionicum (strain DSM 13744 / JCM 10971 / SI).